Consider the following 240-residue polypeptide: Phosphatidylserine decarboxylase proenzyme (240 aa).

The Schiff-base intermediate with substrate; via pyruvic acid role is filled by serine 209. Pyruvic acid (Ser); by autocatalysis is present on serine 209.

The protein belongs to the phosphatidylserine decarboxylase family. PSD-A subfamily. In terms of assembly, heterodimer of a large membrane-associated beta subunit and a small pyruvoyl-containing alpha subunit. Pyruvate serves as cofactor. In terms of processing, is synthesized initially as an inactive proenzyme. Formation of the active enzyme involves a self-maturation process in which the active site pyruvoyl group is generated from an internal serine residue via an autocatalytic post-translational modification. Two non-identical subunits are generated from the proenzyme in this reaction, and the pyruvate is formed at the N-terminus of the alpha chain, which is derived from the carboxyl end of the proenzyme. The post-translation cleavage follows an unusual pathway, termed non-hydrolytic serinolysis, in which the side chain hydroxyl group of the serine supplies its oxygen atom to form the C-terminus of the beta chain, while the remainder of the serine residue undergoes an oxidative deamination to produce ammonia and the pyruvoyl prosthetic group on the alpha chain.

The protein resides in the cell membrane. It carries out the reaction a 1,2-diacyl-sn-glycero-3-phospho-L-serine + H(+) = a 1,2-diacyl-sn-glycero-3-phosphoethanolamine + CO2. It participates in phospholipid metabolism; phosphatidylethanolamine biosynthesis; phosphatidylethanolamine from CDP-diacylglycerol: step 2/2. Its function is as follows. Catalyzes the formation of phosphatidylethanolamine (PtdEtn) from phosphatidylserine (PtdSer). The protein is Phosphatidylserine decarboxylase proenzyme of Mycobacterium avium (strain 104).